The chain runs to 176 residues: Oleosin Ara h 14.0103 (176 aa).

At A2 the chain carries N-acetylalanine; alternate. The next 3 helical transmembrane spans lie at 50–70 (IIAV…SGLS), 75–95 (IIGL…IVPA), and 96–116 (VVTI…GLTG). The interval 156–176 (KTKDAGQEIQTKAQDVKRSSS) is disordered.

This sequence belongs to the oleosin family. As to expression, expressed in seeds (at protein level).

It is found in the lipid droplet. The protein localises to the membrane. Functionally, may have a structural role to stabilize the lipid body during desiccation of the seed by preventing coalescence of the oil. Probably interacts with both lipid and phospholipid moieties of lipid bodies. May also provide recognition signals for specific lipase anchorage in lipolysis during seedling growth. The chain is Oleosin Ara h 14.0103 from Arachis hypogaea (Peanut).